A 398-amino-acid polypeptide reads, in one-letter code: Bifunctional enzyme IspD/IspF (398 aa).

The tract at residues 1 to 234 is 2-C-methyl-D-erythritol 4-phosphate cytidylyltransferase; that stretch reads MPSSKRTAAI…ARLAAALGDI (234 aa). The segment at 235-398 is 2-C-methyl-D-erythritol 2,4-cyclodiphosphate synthase; the sequence is RTGTGYDVHA…LPWNDKGRDT (164 aa). A divalent metal cation is bound by residues Asp-241 and His-243. 4-CDP-2-C-methyl-D-erythritol 2-phosphate contacts are provided by residues 241 to 243 and 267 to 268; these read DVH and HS. A divalent metal cation is bound at residue His-275. 4-CDP-2-C-methyl-D-erythritol 2-phosphate is bound by residues 289–291, 365–368, Phe-372, and Arg-375; these read DIG and TTSE.

It in the N-terminal section; belongs to the IspD/TarI cytidylyltransferase family. IspD subfamily. This sequence in the C-terminal section; belongs to the IspF family. A divalent metal cation is required as a cofactor.

The catalysed reaction is 2-C-methyl-D-erythritol 4-phosphate + CTP + H(+) = 4-CDP-2-C-methyl-D-erythritol + diphosphate. It catalyses the reaction 4-CDP-2-C-methyl-D-erythritol 2-phosphate = 2-C-methyl-D-erythritol 2,4-cyclic diphosphate + CMP. It functions in the pathway isoprenoid biosynthesis; isopentenyl diphosphate biosynthesis via DXP pathway; isopentenyl diphosphate from 1-deoxy-D-xylulose 5-phosphate: step 2/6. The protein operates within isoprenoid biosynthesis; isopentenyl diphosphate biosynthesis via DXP pathway; isopentenyl diphosphate from 1-deoxy-D-xylulose 5-phosphate: step 4/6. Bifunctional enzyme that catalyzes the formation of 4-diphosphocytidyl-2-C-methyl-D-erythritol from CTP and 2-C-methyl-D-erythritol 4-phosphate (MEP) (IspD), and catalyzes the conversion of 4-diphosphocytidyl-2-C-methyl-D-erythritol 2-phosphate (CDP-ME2P) to 2-C-methyl-D-erythritol 2,4-cyclodiphosphate (ME-CPP) with a corresponding release of cytidine 5-monophosphate (CMP) (IspF). The chain is Bifunctional enzyme IspD/IspF from Nitrobacter winogradskyi (strain ATCC 25391 / DSM 10237 / CIP 104748 / NCIMB 11846 / Nb-255).